A 65-amino-acid polypeptide reads, in one-letter code: Conotoxin Am6.4 (65 aa).

Positions 1-33 (STGKRNAGKLTVTDDVEADRDTDPDDKDPSVHN) are disordered. The propeptide occupies 1–36 (STGKRNAGKLTVTDDVEADRDTDPDDKDPSVHNSWR). Over residues 14–26 (DDVEADRDTDPDD) the composition is skewed to acidic residues. 3 disulfides stabilise this stretch: cysteine 40–cysteine 50, cysteine 45–cysteine 59, and cysteine 49–cysteine 64.

In terms of processing, is not hydroxylated. In terms of tissue distribution, expressed by the venom duct.

The protein resides in the secreted. Its function is as follows. Probable toxin that inhibits ion channels. The sequence is that of Conotoxin Am6.4 from Conus amadis (Amadis cone).